The chain runs to 150 residues: Ribosome maturation factor RimP (150 aa).

It belongs to the RimP family.

The protein resides in the cytoplasm. Functionally, required for maturation of 30S ribosomal subunits. In Acidithiobacillus ferrooxidans (strain ATCC 23270 / DSM 14882 / CIP 104768 / NCIMB 8455) (Ferrobacillus ferrooxidans (strain ATCC 23270)), this protein is Ribosome maturation factor RimP.